The sequence spans 495 residues: Putative myristoylated membrane protein 458R (495 aa).

Residue Gly-2 is the site of N-myristoyl glycine; by host attachment. 5 N-linked (GlcNAc...) asparagine; by host glycosylation sites follow: Asn-58, Asn-71, Asn-72, Asn-103, and Asn-111. Residues 150–182 (HLKEIHKIITKEVENAKNNNKDVTKLIEQFSQA) are a coiled coil. A run of 2 helical transmembrane segments spans residues 194–214 (ILSLIIFSTAFLGLGGVYVGG) and 216–236 (IAFPVTLLLSILAFYQYFNWT). Asn-262, Asn-314, Asn-317, Asn-349, and Asn-457 each carry an N-linked (GlcNAc...) asparagine; by host glycan. Residues 469-489 (LWLLCVAVILLFIGIIGMGLG) traverse the membrane as a helical segment.

This sequence belongs to the IIV-6 118L/458R family.

The protein resides in the membrane. The sequence is that of Putative myristoylated membrane protein 458R from Acheta domesticus (House cricket).